The primary structure comprises 328 residues: MIEKIWSGESPLWRLLLPLSWLYGLVSGAIRLCYKLKLKRAWRAPIPVVVVGNLTAGGNGKTPVVVWLVEQLQQRGIRVGVVSRGYGGKAESYPLLLSADTTTAQAGDEPVLIYQRTGAPVAVSPVRSDAVKAILAQHPDVQIIVTDDGLQHYRLARDVEIVVIDGVRRFGNGWWLPAGPMRERAGRLKSVDAVIVNGGVPRSGEIPMHLLPGQAVNLRTGTRCDVAQLEHVVTIAGIGHPPRFFATLKMCGVQPEKCVPLADHQSLNHADVSALVSAGQTLVMTEKDAVKCRAFAEENWWYLPVDAQLSGDELAKLLAQLTSLASGH.

55 to 62 (TAGGNGKT) contributes to the ATP binding site.

This sequence belongs to the LpxK family.

It carries out the reaction a lipid A disaccharide + ATP = a lipid IVA + ADP + H(+). Its pathway is glycolipid biosynthesis; lipid IV(A) biosynthesis; lipid IV(A) from (3R)-3-hydroxytetradecanoyl-[acyl-carrier-protein] and UDP-N-acetyl-alpha-D-glucosamine: step 6/6. Functionally, transfers the gamma-phosphate of ATP to the 4'-position of a tetraacyldisaccharide 1-phosphate intermediate (termed DS-1-P) to form tetraacyldisaccharide 1,4'-bis-phosphate (lipid IVA). This Escherichia coli O81 (strain ED1a) protein is Tetraacyldisaccharide 4'-kinase.